The primary structure comprises 474 residues: E3 ubiquitin-protein ligase RNF14 (474 aa).

The 127-residue stretch at 11–137 (DELLALASIY…QFLKEETLAY (127 aa)) folds into the RWD domain. The D-box motif lies at 37–45 (RIYLDLPQN). The tract at residues 216 to 457 (KLFLCSICFC…DPGSPCFNRL (242 aa)) is TRIAD supradomain. Residues Cys-220, Cys-223, Cys-238, His-240, Cys-243, Cys-246, Cys-265, Cys-270, Cys-309, Cys-314, Cys-329, Cys-332, Cys-337, Cys-340, and His-345 each coordinate Zn(2+). The segment at 220-270 (CSICFCEKLGSECMYFLECRHVYCKACLKDYFEIQIRDGQVQCLNCPEPKC) adopts an RING-type 1 zinc-finger fold. The IBR-type zinc-finger motif lies at 289–350 (ARYDRLLLQS…RLTYHGVSPC (62 aa)). Ser-348 carries the phosphoserine modification. Residue Cys-350 coordinates Zn(2+). Residues 351–395 (KVTAEKLMDLRNEYLQADEANKRLLDQRYGKRVIQKALEEMESKE) are a coiled coil. The interaction with androgen receptor stretch occupies residues 361-474 (RNEYLQADEA…DDIWEDEVED (114 aa)). Residues Cys-404 and Cys-407 each coordinate Zn(2+). The RING-type 2; atypical zinc finger occupies 404–433 (CPCCGTPIEKLDGCNKMTCTGCMQYFCWIC). Cys-417 is a catalytic residue. Positions 422, 425, 430, 433, 445, and 453 each coordinate Zn(2+).

It belongs to the RBR family. RNF14 subfamily. As to quaternary structure, interacts with GCN1; interaction takes place in response to ribosome collisions and is required for ubiquitination of EEF1A1/eEF1A. Interacts with the ubiquitin-conjugating enzymes UBE2E1 and UBE2E2. Interacts with AR/androgen receptor. Interacts with TCF7/TCF1, TCF7L1/TCF3 and TCF7L2/TCF4; promoting Wnt signaling. In terms of processing, RING-type zinc finger-dependent and UBE2E2-dependent autoubiquitination. As to expression, widely expressed.

Its subcellular location is the cytoplasm. The protein localises to the nucleus. The enzyme catalyses [E2 ubiquitin-conjugating enzyme]-S-ubiquitinyl-L-cysteine + [acceptor protein]-L-lysine = [E2 ubiquitin-conjugating enzyme]-L-cysteine + [acceptor protein]-N(6)-ubiquitinyl-L-lysine.. The protein operates within protein modification; protein ubiquitination. Its function is as follows. E3 ubiquitin-protein ligase that plays a key role in the RNF14-RNF25 translation quality control pathway, a pathway that takes place when a ribosome has stalled during translation, and which promotes ubiquitination and degradation of translation factors on stalled ribosomes. Recruited to stalled ribosomes by the ribosome collision sensor GCN1 and mediates 'Lys-6'-linked ubiquitination of target proteins, leading to their degradation. Mediates ubiquitination of EEF1A1/eEF1A and ETF1/eRF1 translation factors on stalled ribosomes, leading to their degradation. Also catalyzes ubiquitination of ribosomal proteins RPL0, RPL1, RPL12, RPS13 and RPS17. Specifically required to resolve RNA-protein cross-links caused by reactive aldehydes, which trigger translation stress by stalling ribosomes: acts by catalying 'Lys-6'-linked ubiquitination of RNA-protein cross-links, leading to their removal by the ATP-dependent unfoldase VCP and subsequent degradation by the proteasome. Independently of its function in the response to stalled ribosomes, acts as a regulator of transcription in Wnt signaling via its interaction with TCF transcription factors (TCF7/TCF1, TCF7L1/TCF3 and TCF7L2/TCF4). May also play a role as a coactivator for androgen- and, to a lesser extent, progesterone-dependent transcription. In Homo sapiens (Human), this protein is E3 ubiquitin-protein ligase RNF14.